A 399-amino-acid chain; its full sequence is Probable peptidoglycan glycosyltransferase FtsW (399 aa).

Residues Met1–Asn32 lie on the Cytoplasmic side of the membrane. The chain crosses the membrane as a helical span at residues Val33–Ser53. Residues Met54–Ala72 lie on the Periplasmic side of the membrane. Residues Ile73–Trp93 form a helical membrane-spanning segment. Over Phe94 to Thr97 the chain is Cytoplasmic. A helical transmembrane segment spans residues Phe98 to Val118. Residues Asn119–Arg126 lie on the Periplasmic side of the membrane. Residues Leu127–Ala147 form a helical membrane-spanning segment. The Cytoplasmic portion of the chain corresponds to Asp148 to Thr159. The chain crosses the membrane as a helical span at residues His160–Ala180. At Glu181–Asp183 the chain is on the periplasmic side. Residues Leu184–Pro204 form a helical membrane-spanning segment. The Cytoplasmic segment spans residues Pro205–Gln207. A helical membrane pass occupies residues Phe208–Tyr228. Residues Arg229–Glu292 are Periplasmic-facing. Residues Phe293–Ile313 form a helical membrane-spanning segment. Residues Lys314–Ala327 lie on the Cytoplasmic side of the membrane. A helical transmembrane segment spans residues Gly328–Met348. Residues Asn349 to Thr359 lie on the Periplasmic side of the membrane. Residues Leu360–Ile380 form a helical membrane-spanning segment. At Leu381–Phe399 the chain is on the cytoplasmic side.

Belongs to the SEDS family. FtsW subfamily.

It is found in the cell inner membrane. It catalyses the reaction [GlcNAc-(1-&gt;4)-Mur2Ac(oyl-L-Ala-gamma-D-Glu-L-Lys-D-Ala-D-Ala)](n)-di-trans,octa-cis-undecaprenyl diphosphate + beta-D-GlcNAc-(1-&gt;4)-Mur2Ac(oyl-L-Ala-gamma-D-Glu-L-Lys-D-Ala-D-Ala)-di-trans,octa-cis-undecaprenyl diphosphate = [GlcNAc-(1-&gt;4)-Mur2Ac(oyl-L-Ala-gamma-D-Glu-L-Lys-D-Ala-D-Ala)](n+1)-di-trans,octa-cis-undecaprenyl diphosphate + di-trans,octa-cis-undecaprenyl diphosphate + H(+). Its pathway is cell wall biogenesis; peptidoglycan biosynthesis. Peptidoglycan polymerase that is essential for cell division. In Acinetobacter baylyi (strain ATCC 33305 / BD413 / ADP1), this protein is Probable peptidoglycan glycosyltransferase FtsW.